Reading from the N-terminus, the 620-residue chain is Probably inactive leucine-rich repeat receptor-like protein kinase At5g48380 (620 aa).

The first 27 residues, 1 to 27 (MMMGRLVFVIWLYNCLCLLLLSSLVDA), serve as a signal peptide directing secretion. Residues 28 to 228 (DQANIDCLRT…SASSSRGKVV (201 aa)) are Extracellular-facing. Residues asparagine 56, asparagine 111, asparagine 119, and asparagine 147 are each glycosylated (N-linked (GlcNAc...) asparagine). LRR repeat units lie at residues 101–124 (DLTG…STLI), 126–148 (LVTI…ISNI), 150–172 (FLNT…LAQL), and 174–196 (RLKT…NQTL). Asparagine 193 carries an N-linked (GlcNAc...) asparagine glycan. The chain crosses the membrane as a helical span at residues 229–249 (IIAAVGGLTAAALVVGVVLFF). The Cytoplasmic segment spans residues 250–620 (YFRKLGAVRK…DFIEELIVAR (371 aa)). Threonine 300 carries the post-translational modification Phosphothreonine. Residues 303–596 (FKKDNIIATG…RAIGESYNFT (294 aa)) enclose the Protein kinase domain. ATP contacts are provided by residues 309–317 (IATGRTGTM) and lysine 331. At threonine 463 the chain carries Phosphothreonine. Phosphotyrosine is present on tyrosine 479. Position 482 is a phosphothreonine (threonine 482).

Belongs to the protein kinase superfamily. Ser/Thr protein kinase family.

The protein resides in the cell membrane. The polypeptide is Probably inactive leucine-rich repeat receptor-like protein kinase At5g48380 (Arabidopsis thaliana (Mouse-ear cress)).